A 300-amino-acid chain; its full sequence is 3-methyl-2-oxobutanoate hydroxymethyltransferase (300 aa).

Mg(2+)-binding residues include Asp-75 and Asp-118. 3-methyl-2-oxobutanoate contacts are provided by residues Asp-75–Ser-76, Asp-118, and Lys-147. Residue Glu-149 participates in Mg(2+) binding. Residue Glu-216 is the Proton acceptor of the active site.

This sequence belongs to the PanB family. As to quaternary structure, homodecamer; pentamer of dimers. The cofactor is Mg(2+).

It is found in the cytoplasm. The catalysed reaction is 3-methyl-2-oxobutanoate + (6R)-5,10-methylene-5,6,7,8-tetrahydrofolate + H2O = 2-dehydropantoate + (6S)-5,6,7,8-tetrahydrofolate. It functions in the pathway cofactor biosynthesis; (R)-pantothenate biosynthesis; (R)-pantoate from 3-methyl-2-oxobutanoate: step 1/2. Its function is as follows. Catalyzes the reversible reaction in which hydroxymethyl group from 5,10-methylenetetrahydrofolate is transferred onto alpha-ketoisovalerate to form ketopantoate. The protein is 3-methyl-2-oxobutanoate hydroxymethyltransferase of Verminephrobacter eiseniae (strain EF01-2).